A 470-amino-acid chain; its full sequence is UDP-N-acetylmuramoylalanine--D-glutamate ligase (470 aa).

121 to 127 (GTNGKST) is a binding site for ATP.

It belongs to the MurCDEF family.

Its subcellular location is the cytoplasm. It catalyses the reaction UDP-N-acetyl-alpha-D-muramoyl-L-alanine + D-glutamate + ATP = UDP-N-acetyl-alpha-D-muramoyl-L-alanyl-D-glutamate + ADP + phosphate + H(+). Its pathway is cell wall biogenesis; peptidoglycan biosynthesis. Functionally, cell wall formation. Catalyzes the addition of glutamate to the nucleotide precursor UDP-N-acetylmuramoyl-L-alanine (UMA). This Rhizobium etli (strain ATCC 51251 / DSM 11541 / JCM 21823 / NBRC 15573 / CFN 42) protein is UDP-N-acetylmuramoylalanine--D-glutamate ligase.